A 428-amino-acid chain; its full sequence is Ribulose bisphosphate carboxylase (428 aa).

Lys151 acts as the Proton acceptor in catalysis. Lys153 lines the substrate pocket. Mg(2+) contacts are provided by Lys177, Asp179, and Glu180. Lys177 carries the N6-carboxylysine modification. His270 acts as the Proton acceptor in catalysis. Residues Arg271, His303, 354 to 356, and 376 to 379 each bind substrate; these read SGG and QFGG.

The protein belongs to the RuBisCO large chain family. Type III subfamily. As to quaternary structure, homodimer. In contrast to form I RuBisCO, the form III RuBisCO is composed solely of large subunits. It depends on Mg(2+) as a cofactor.

The catalysed reaction is 2 (2R)-3-phosphoglycerate + 2 H(+) = D-ribulose 1,5-bisphosphate + CO2 + H2O. It carries out the reaction D-ribulose 1,5-bisphosphate + O2 = 2-phosphoglycolate + (2R)-3-phosphoglycerate + 2 H(+). With respect to regulation, reversibly inhibited by O(2). Catalyzes the addition of molecular CO(2) and H(2)O to ribulose 1,5-bisphosphate (RuBP), generating two molecules of 3-phosphoglycerate (3-PGA). Functions in an archaeal AMP degradation pathway, together with AMP phosphorylase and R15P isomerase. This chain is Ribulose bisphosphate carboxylase, found in Methanosarcina acetivorans (strain ATCC 35395 / DSM 2834 / JCM 12185 / C2A).